The chain runs to 473 residues: 3-isopropylmalate dehydratase large subunit (473 aa).

Cys-351, Cys-414, and Cys-417 together coordinate [4Fe-4S] cluster.

This sequence belongs to the aconitase/IPM isomerase family. LeuC type 1 subfamily. Heterodimer of LeuC and LeuD. [4Fe-4S] cluster is required as a cofactor.

It catalyses the reaction (2R,3S)-3-isopropylmalate = (2S)-2-isopropylmalate. The protein operates within amino-acid biosynthesis; L-leucine biosynthesis; L-leucine from 3-methyl-2-oxobutanoate: step 2/4. In terms of biological role, catalyzes the isomerization between 2-isopropylmalate and 3-isopropylmalate, via the formation of 2-isopropylmaleate. The protein is 3-isopropylmalate dehydratase large subunit of Polaromonas sp. (strain JS666 / ATCC BAA-500).